We begin with the raw amino-acid sequence, 248 residues long: Large ribosomal subunit protein bL9m (248 aa).

The N-terminal 25 residues, 1–25 (MLKNIYVTPLNLLKSATSLQQQVRT), are a transit peptide targeting the mitochondrion.

The protein belongs to the bacterial ribosomal protein bL9 family. In terms of assembly, component of the mitochondrial ribosome large subunit (39S) which comprises a 16S rRNA and about 50 distinct proteins.

It is found in the mitochondrion. This chain is Large ribosomal subunit protein bL9m (mRpL9), found in Drosophila melanogaster (Fruit fly).